A 180-amino-acid polypeptide reads, in one-letter code: uncharacterized protein (180 aa).

The interval 138 to 180 (SVMPVPMPQQNSDNGSTPHIVDSSKSKDKSSNDGDNGVFTGDE) is disordered. Residues 145–154 (PQQNSDNGST) show a composition bias toward polar residues. Over residues 159–169 (DSSKSKDKSSN) the composition is skewed to basic and acidic residues.

This is an uncharacterized protein from Acidianus filamentous virus 2 (isolate Italy/Pozzuoli) (AFV-2).